Consider the following 339-residue polypeptide: MHVGIFADGGYEKGMGHVVRMKRLAEGLKQRCLITFYTNQDSEAFLHEEHWQVIVKPELQQHEFILREIKSKKLDLLLFDILGAPAELLKKIKTETDAKIVLFEEKNGKSIQYSDAVINGIYGDIRSRVYVQGNTRIYEGPDYLILHPAFQAAREDYTLKKDCRNILVALGGSDPKQLIFKVLAAADQVPDIKDKNMMFVMGSASPHQEAVRRRIEKKPQYKMIEQTNDMAGLMKQADAAIVAGGISLYEAICIGVPCLVLSQVEHQTATAKTFADQGAALDLGLGELVPDETLIYQMSRIMSSYPLRLSLHKGGRPLVDGKGIIRVTAILQDLYEQEI.

The chain crosses the membrane as a helical span at residues 241 to 261; it reads IVAGGISLYEAICIGVPCLVL.

The protein to M.jannaschii MJ1062.

The protein localises to the cell membrane. Its pathway is spore coat biogenesis; spore coat polysaccharide biosynthesis. This Bacillus subtilis (strain 168) protein is Spore coat polysaccharide biosynthesis protein SpsG (spsG).